We begin with the raw amino-acid sequence, 153 residues long: uncharacterized protein (153 aa).

This is an uncharacterized protein from Escherichia coli (strain K12).